Reading from the N-terminus, the 400-residue chain is Phosphoglycerate kinase (400 aa).

Substrate-binding positions include 21–23 (DFN), R37, 60–63 (HFGR), R119, and R152. ATP-binding positions include K205, G296, E327, and 353–356 (GGDT).

Belongs to the phosphoglycerate kinase family. As to quaternary structure, monomer.

The protein localises to the cytoplasm. It carries out the reaction (2R)-3-phosphoglycerate + ATP = (2R)-3-phospho-glyceroyl phosphate + ADP. It participates in carbohydrate degradation; glycolysis; pyruvate from D-glyceraldehyde 3-phosphate: step 2/5. The protein is Phosphoglycerate kinase of Aliarcobacter butzleri (strain RM4018) (Arcobacter butzleri).